A 211-amino-acid polypeptide reads, in one-letter code: Protein-methionine-sulfoxide reductase heme-binding subunit MsrQ (211 aa).

4 helical membrane-spanning segments follow: residues 17 to 37 (LAGL…GLGA), 82 to 102 (LWCF…ELGV), 116 to 136 (PYLT…FTST), and 153 to 173 (FVYL…KIIS).

The protein belongs to the MsrQ family. In terms of assembly, heterodimer of a catalytic subunit (MsrP) and a heme-binding subunit (MsrQ). FMN serves as cofactor. It depends on heme b as a cofactor.

It is found in the cell inner membrane. In terms of biological role, part of the MsrPQ system that repairs oxidized periplasmic proteins containing methionine sulfoxide residues (Met-O), using respiratory chain electrons. Thus protects these proteins from oxidative-stress damage caused by reactive species of oxygen and chlorine generated by the host defense mechanisms. MsrPQ is essential for the maintenance of envelope integrity under bleach stress, rescuing a wide series of structurally unrelated periplasmic proteins from methionine oxidation, including the primary periplasmic chaperone SurA and the lipoprotein Pal. MsrQ provides electrons for reduction to the reductase catalytic subunit MsrP, using the quinone pool of the respiratory chain. This is Protein-methionine-sulfoxide reductase heme-binding subunit MsrQ from Shigella sonnei (strain Ss046).